Here is a 628-residue protein sequence, read N- to C-terminus: Netrin-4 (628 aa).

Residues 1–18 form the signal peptide; the sequence is MGSCARLLLLWGCTVVAA. A Laminin N-terminal domain is found at 30–261; sequence CEKACNPRMG…AIYDFIVKGS (232 aa). N-linked (GlcNAc...) asparagine glycosylation is found at Asn-56 and Asn-163. Disulfide bonds link Cys-262-Cys-271, Cys-264-Cys-293, Cys-295-Cys-304, Cys-307-Cys-329, Cys-332-Cys-341, Cys-334-Cys-359, Cys-362-Cys-371, Cys-374-Cys-392, Cys-395-Cys-413, Cys-397-Cys-420, Cys-422-Cys-431, and Cys-434-Cys-446. Laminin EGF-like domains lie at 262 to 331, 332 to 394, and 395 to 448; these read CFCN…ECRT, CKCN…ACKP, and CSCH…GCRP. An N-linked (GlcNAc...) asparagine glycan is attached at Asn-353. Asn-483 carries an N-linked (GlcNAc...) asparagine glycan. 2 disulfides stabilise this stretch: Cys-506–Cys-576 and Cys-520–Cys-627. An NTR domain is found at 506–627; that stretch reads CECKEQTLGN…KVMDILKREC (122 aa).

In terms of assembly, may form a homodimer. As to expression, expressed in kidney, spleen, mammary gland, aorta, heart, ovary, prostate and fetal spleen.

Its subcellular location is the secreted. It localises to the extracellular space. The protein resides in the extracellular matrix. It is found in the basement membrane. In terms of biological role, may play an important role in neural, kidney and vascular development. Promotes neurite elongation from olfactory bulb explants. The polypeptide is Netrin-4 (NTN4) (Homo sapiens (Human)).